Here is a 309-residue protein sequence, read N- to C-terminus: Large ribosomal subunit protein mL45 (309 aa).

This sequence belongs to the mitochondrion-specific ribosomal protein mL45 family. Component of the mitochondrial ribosome large subunit (39S) which comprises a 16S rRNA and about 50 distinct proteins.

Its subcellular location is the mitochondrion. Functionally, component of the mitochondrial large ribosomal subunit (mt-LSU). Within the mitochondrial ribosomes, required to direct the nascent polypeptide toward the tunnel exit and position the exit at a distance from the membrane surface. The polypeptide is Large ribosomal subunit protein mL45 (mrpl45) (Xenopus laevis (African clawed frog)).